The sequence spans 1026 residues: DNA cross-link repair 1A protein (1026 aa).

A nuclear localization region region spans residues 1–189 (MLEDTWEEEI…RDSKEPLGSP (189 aa)). Residues 12 to 110 (EYKSKRKPKP…HRTRRGKQVT (99 aa)) form a disordered region. Over residues 34–65 (SVEKSTDGKHQSKGNEKRTSENPGKTKDHKVC) the composition is skewed to basic and acidic residues. Over residues 71–82 (SQISAGSSQSSS) the composition is skewed to low complexity. Over residues 98-107 (KKQHRTRRGK) the composition is skewed to basic residues. The UBZ4-type zinc finger occupies 118–148 (DGYCPSCQMPFSSLLGQTPQWHVFECLDSPP). Zn(2+) contacts are provided by cysteine 121, cysteine 124, histidine 139, and cysteine 143. Residues lysine 359, lysine 434, and lysine 522 each participate in a glycyl lysine isopeptide (Lys-Gly) (interchain with G-Cter in SUMO2) cross-link. Positions 401–602 (SQEDLPHTDA…SSLSDLEFDA (202 aa)) are nuclear focus formation. Disordered stretches follow at residues 474–542 (PLEK…SKKV), 560–590 (ETSL…CKRK), and 602–651 (AKNL…PELG). Positions 527-540 (SPSSPKCSPSQPSK) are enriched in low complexity. The span at 569 to 581 (EGPNVSPVVSPNQ) shows a compositional bias: polar residues. Phosphoserine occurs at positions 574 and 578. Positions 619–628 (RQHRRKRHKT) are enriched in basic residues. Residue lysine 657 forms a Glycyl lysine isopeptide (Lys-Gly) (interchain with G-Cter in SUMO2) linkage.

Belongs to the DNA repair metallo-beta-lactamase (DRMBL) family. As to quaternary structure, binds constitutively to TP53BP1. Binds CDC27, which is itself a component of the anaphase promoting complex (APC). Binds PIAS1.

The protein resides in the nucleus. The enzyme catalyses a beta-lactam + H2O = a substituted beta-amino acid. Functionally, may be required for DNA interstrand cross-link repair. Also required for checkpoint mediated cell cycle arrest in early prophase in response to mitotic spindle poisons. The polypeptide is DNA cross-link repair 1A protein (Dclre1a) (Mus musculus (Mouse)).